The primary structure comprises 98 residues: NADH-ubiquinone oxidoreductase chain 4L (98 aa).

The next 3 helical transmembrane spans lie at 1–21, 29–49, and 61–81; these read MSLT…GLLM, SLLC…VIIL, and IILL…LVMV.

The protein belongs to the complex I subunit 4L family. As to quaternary structure, core subunit of respiratory chain NADH dehydrogenase (Complex I) which is composed of 45 different subunits.

The protein localises to the mitochondrion inner membrane. The enzyme catalyses a ubiquinone + NADH + 5 H(+)(in) = a ubiquinol + NAD(+) + 4 H(+)(out). In terms of biological role, core subunit of the mitochondrial membrane respiratory chain NADH dehydrogenase (Complex I) which catalyzes electron transfer from NADH through the respiratory chain, using ubiquinone as an electron acceptor. Part of the enzyme membrane arm which is embedded in the lipid bilayer and involved in proton translocation. The protein is NADH-ubiquinone oxidoreductase chain 4L (MT-ND4L) of Uroderma bilobatum (Tent-making bat).